The following is a 260-amino-acid chain: MVKKTYAIRYVAGQPVERVFPMSTHQLGNTLPVGTPLITGTNELRVVVWNIYKQQRPSWRKVLKELTNESQLILLQEAQTTPDLVEFATSNYLISDQVPAFLLPQHPSGVMTLATSHPVYCCPLREKEPLLRLSKSALITVYLLQDNRQLMVINVHAINFSFGVDVYSRQLNNIGVHVRLHNGPVIMAGDFNAWSKQRLNALKRFTRYLHLEEVSFTDDYRTIAFGRPLDFIFYRELNIANAIVIPTDASDHNPLVVNFY.

This sequence belongs to the UPF0294 family.

It localises to the cytoplasm. The sequence is that of UPF0294 protein plu0699 from Photorhabdus laumondii subsp. laumondii (strain DSM 15139 / CIP 105565 / TT01) (Photorhabdus luminescens subsp. laumondii).